We begin with the raw amino-acid sequence, 730 residues long: Aspyridones cluster regulator apdR (730 aa).

The zn(2)-C6 fungal-type DNA-binding region spans 20-46 (CTECRRRKIRCDQATPCRHCEKAALRC).

The protein localises to the nucleus. Transcription factor involved in regulation of gene cluster that mediates the biosynthesis of aspyridones. The protein is Aspyridones cluster regulator apdR of Emericella nidulans (strain FGSC A4 / ATCC 38163 / CBS 112.46 / NRRL 194 / M139) (Aspergillus nidulans).